The primary structure comprises 118 residues: Large ribosomal subunit protein bL17 (118 aa).

The protein belongs to the bacterial ribosomal protein bL17 family. Part of the 50S ribosomal subunit. Contacts protein L32.

In Hydrogenobaculum sp. (strain Y04AAS1), this protein is Large ribosomal subunit protein bL17.